Reading from the N-terminus, the 63-residue chain is Beta-defensin 4 (63 aa).

A signal peptide spans 1 to 22; sequence MRLHHLLLAVLFLVLSAGSGFT. Glutamine 23 is subject to Pyrrolidone carboxylic acid. 3 disulfides stabilise this stretch: cysteine 31–cysteine 60, cysteine 38–cysteine 53, and cysteine 43–cysteine 61.

This sequence belongs to the beta-defensin family. In terms of tissue distribution, neutrophilic granules.

It is found in the secreted. Functionally, has bactericidal activity. Active against E.coli ML35 and S.aureus 502A. This Bos taurus (Bovine) protein is Beta-defensin 4 (DEFB4).